Here is a 323-residue protein sequence, read N- to C-terminus: rRNA 2'-O-methyltransferase fibrillarin (323 aa).

The interval 1–80 (MSFRPGSRGG…GARGGAKGGA (80 aa)) is disordered. Residues 7-78 (SRGGARGGRG…RGGARGGAKG (72 aa)) show a composition bias toward gly residues. 16 positions are modified to asymmetric dimethylarginine: arginine 8, arginine 12, arginine 15, arginine 19, arginine 25, arginine 29, arginine 35, arginine 39, arginine 43, arginine 49, arginine 53, arginine 57, arginine 61, arginine 65, arginine 69, and arginine 73. Residues 175–176 (TS), 194–195 (EF), 219–220 (DA), and 239–242 (DVAQ) each bind S-adenosyl-L-methionine.

It belongs to the methyltransferase superfamily. Fibrillarin family. In terms of assembly, component of box C/D small nucleolar ribonucleoprotein (snoRNP) particles that contain SNU13, NOP1, SIK1/NOP56 and NOP58, plus a guide RNA. By homology to other fibrillarins, some or all of the N-terminal domain arginines are modified to asymmetric dimethylarginine (DMA).

Its subcellular location is the nucleus. It is found in the nucleolus. It carries out the reaction L-glutaminyl-[histone H2A] + S-adenosyl-L-methionine = N(5)-methyl-L-glutaminyl-[histone H2A] + S-adenosyl-L-homocysteine + H(+). Functionally, S-adenosyl-L-methionine-dependent methyltransferase that has the ability to methylate both RNAs and proteins. Involved in pre-rRNA processing. Utilizes the methyl donor S-adenosyl-L-methionine to catalyze the site-specific 2'-hydroxyl methylation of ribose moieties in pre-ribosomal RNA. Site specificity is provided by a guide RNA that base pairs with the substrate. Methylation occurs at a characteristic distance from the sequence involved in base pairing with the guide RNA. Also acts as a protein methyltransferase by mediating methylation of 'Gln-105' of histone H2A (H2AQ105me), a modification that impairs binding of the FACT complex and is specifically present at 35S ribosomal DNA locus. This Candida glabrata (strain ATCC 2001 / BCRC 20586 / JCM 3761 / NBRC 0622 / NRRL Y-65 / CBS 138) (Yeast) protein is rRNA 2'-O-methyltransferase fibrillarin (NOP1).